Here is a 507-residue protein sequence, read N- to C-terminus: Wax ester synthase/diacylglycerol acyltransferase 5 (507 aa).

Over 1–211 (MEIKIRRRRG…LKTSSRCYSR (211 aa)) the chain is Cytoplasmic. Catalysis depends on His-161, which acts as the Proton acceptor. The helical transmembrane segment at 212–232 (FFWLVMVLWSAALLVLNTVCD) threads the bilayer. At 233-507 (ALEFIATALF…VVVQERTSTQ (275 aa)) the chain is on the lumenal side. Residues Asn-314 and Asn-421 are each glycosylated (N-linked (GlcNAc...) asparagine).

It in the N-terminal section; belongs to the long-chain O-acyltransferase family. As to expression, mostly expressed in flowers and siliques.

The protein resides in the cell membrane. It is found in the endoplasmic reticulum membrane. It catalyses the reaction a long chain fatty alcohol + a fatty acyl-CoA = a wax ester + CoA. The enzyme catalyses an acyl-CoA + a 1,2-diacyl-sn-glycerol = a triacyl-sn-glycerol + CoA. It participates in glycerolipid metabolism; triacylglycerol biosynthesis. Its pathway is lipid metabolism. Bifunctional wax ester synthase/diacylglycerol acyltransferase. Involved in cuticular wax biosynthesis. This chain is Wax ester synthase/diacylglycerol acyltransferase 5, found in Arabidopsis thaliana (Mouse-ear cress).